Consider the following 1217-residue polypeptide: MKGMSHEPKSPSLGMLSTATRTTATVNPLTPSPLNGALVPSGSPATSSALSAQAAPSSSFAAALRKLAKQAEEPRGSSLSSESSPVSSPATNHSSPASTPKRVPMGPIIVPPGGHSVPSTPPVVTIAPTKTVNGVWRSESRQDAGSRSSSGGRERLIVEPPLPQEKAGGPAIPSHLLSTPYPFGLSPSSVVQDSRFPPLNLQRPVHHVVPPSTVTEDYLRSFRPYHTTDDLRMSSLPPLGLDPATAAAYYHPSYLAPHPFPHPAFRMDDSYCLSALRSPFYPIPTPGSLPPLHPSAMHLHLSGVRYPPELSHSSLAALHSERMSGLSAERLQMDEELRREREREREREREREADREREKEREREREKEREQEKEREREKERERELERQREQRAREKELLAAKALEPSFLPVAELHGLRGHATEERGKPSEQLTPTRAEKLKDAGLQAPKPVQHPLHPVPTPHHTVPSLISNHGIFSLPSSSAATALLIQRTNEEEKWLARQRRLRQEKEDRQSQVSEFRQQVLEQHLDMGRPPVPAEAEHRPESTTRPGPNRHEPGGRDPPQHFGGPPPLISPKPQLHAAPTALWNPVSLMDNTLETRRAESHSLHSHPAAFEPSRQAAVPLVKVERVFCPEKAEEGPRKREPAPLDKYQPPPPPPREGGSLEHQPFLPGPGPFLAELEKSTQTILGQQRASLPQAATFGELSGPLKPGSPYRPPVPRAPDPAYIYDEFLQQRRRLVSKLDLEERRRREAQEKGYYYDLDDSYDESDEEEVRAHLRCVAEQPPLKLDTSSEKLEFLQLFGLTTQQQKEELVAQKRRKRRRMLRERSPSPPTIQSKRQTPSPRLALSTRYSPDEMNNSPNFEEKKKFLTIFNLTHISAEKRKDKERLVEMLRAMKQKALSAAVADSLTNSPRDSPAVSLSEPATQQASLDVEKPVGVAASLSDIPKAAEPGKLEQVRPQELSRVQELAPASGEKARLSEAPGGKKSLSMLHYIRGAAPKDIPVPLSHSTNGKSKPWEPFVAEEFAHQFHESVLQSTQKALQKHKGSVAVLSAEQNHKVDTSVHYNIPELQSSSRAPPPQHNGQQEPPTARKGPPTQELDRDSEEEEEEDDEDGEDEEEVPKRKWQGIEAVFEAYQEHIEEQNLERQVLQTQCRRLEARHYSLSLTAEQLSHSVAELRSQKQKMVSERERLQAELDHLRKCLALPAMHWPRGYLKGYPR.

Residues 1–155 are disordered; that stretch reads MKGMSHEPKS…SRSSSGGRER (155 aa). Serine 10 is subject to Phosphoserine. The span at 15-33 shows a compositional bias: polar residues; the sequence is MLSTATRTTATVNPLTPSP. 2 stretches are compositionally biased toward low complexity: residues 43–63 and 76–89; these read SPAT…FAAA and GSSL…VSSP. Serine 84 and serine 95 each carry phosphoserine. A compositionally biased stretch (low complexity) spans 103–114; the sequence is VPMGPIIVPPGG. Asymmetric dimethylarginine is present on arginine 305. Residues 321-403 adopt a coiled-coil conformation; the sequence is ERMSGLSAER…REKELLAAKA (83 aa). Disordered regions lie at residues 324-385 and 418-465; these read SGLS…EREL and RGHA…HHTV. The segment covering 331 to 385 has biased composition (basic and acidic residues); sequence LQMDEELRREREREREREREREADREREKEREREREKEREQEKEREREKEREREL. Threonine 433 is modified (phosphothreonine). Residues 450–465 are compositionally biased toward low complexity; that stretch reads PVQHPLHPVPTPHHTV. Lysine 496 bears the N6-acetyllysine mark. 3 disordered regions span residues 526-579, 633-675, and 699-720; these read HLDM…QLHA, KAEE…GPFL, and FGEL…PRAP. Basic and acidic residues-rich tracts occupy residues 551–561 and 633–645; these read NRHEPGGRDPP and KAEE…EPAP. The span at 711–720 shows a compositional bias: pro residues; the sequence is PYRPPVPRAP. Lysine 739 bears the N6-acetyllysine mark. Serine 766 carries the phosphoserine modification. Disordered regions lie at residues 807-858, 903-930, 948-981, and 1068-1122; these read KEEL…NNSP, ADSL…SLDV, EPGK…EAPG, and LQSS…PKRK. Residues 813-822 show a composition bias toward basic residues; sequence QKRRKRRRML. Phosphoserine is present on residues serine 826 and serine 828. Composition is skewed to polar residues over residues 831–840 and 847–858; these read TIQSKRQTPS and TRYSPDEMNNSP. Phosphoserine is present on serine 857. Threonine 907 is modified (phosphothreonine). Serine 909 is modified (phosphoserine). A compositionally biased stretch (polar residues) spans 1068-1085; sequence LQSSSRAPPPQHNGQQEP. Residues 1099–1117 show a composition bias toward acidic residues; sequence RDSEEEEEEDDEDGEDEEE. Serine 1101 carries the post-translational modification Phosphoserine. A coiled-coil region spans residues 1127–1201; that stretch reads EAVFEAYQEH…ELDHLRKCLA (75 aa).

As to quaternary structure, may be a component of a BHC histone deacetylase complex that contains HDAC1, HDAC2, HMG20B/BRAF35, KDM1A, RCOR1/CoREST, PHF21A/BHC80, ZMYM2, ZNF217, ZMYM3, GSE1 and GTF2I.

The protein is Genetic suppressor element 1 (GSE1) of Homo sapiens (Human).